Here is a 319-residue protein sequence, read N- to C-terminus: MEPILAPNPNRFVIFPIQYHDIWNMYKKAEASFWTVEEVDISKDINDWNKVTPDEKYFIKHVLAFFAASDGIVNENLAERFCTEVQITEARCFYGFRMAIENIHSEMYSLLIDTYVKDSNEKNYLFNAIETMPCVKKKADWAQKWIHDSAGYGERLIAFAAVEGIFFSGSFASIFWLKKRGLMPGLTFSNELISRDEGLHCDFACLMFKHLLHPPSEETVRSIITDAVSIEQEFLTAALPVKLIGMNCEMMKTYIEFVADRLISELGFKKIYNVTNPFDFMENISLEGKTNFFEKRVGEYQKMGVMSQKDNHFSLDVDF.

The Fe cation site is built by aspartate 70, glutamate 101, and histidine 104. The active site involves tyrosine 108. Residues glutamate 163, glutamate 197, and histidine 200 each coordinate Fe cation. Residues 313 to 319 (FSLDVDF) are interaction with R1.

Belongs to the ribonucleoside diphosphate reductase small chain family. In terms of assembly, interacts with RNR1/OPG080 subunit. Can interact with host RNR1 supunit. Fe cation is required as a cofactor.

It carries out the reaction a 2'-deoxyribonucleoside 5'-diphosphate + [thioredoxin]-disulfide + H2O = a ribonucleoside 5'-diphosphate + [thioredoxin]-dithiol. Ribonucleoside-diphosphate reductase holoenzyme provides the precursors necessary for viral DNA synthesis. Allows virus growth in non-dividing cells. Catalyzes the biosynthesis of deoxyribonucleotides from the corresponding ribonucleotides. The sequence is that of Ribonucleoside-diphosphate reductase small chain (OPG048) from Vaccinia virus (strain L-IVP) (VACV).